The primary structure comprises 164 residues: Class I hydrophobin rodA (164 aa).

The signal sequence occupies residues 1-18; it reads MRFSISALVLGLAATVYA. Asparagine 50 carries an N-linked (GlcNAc...) asparagine glycan. 4 disulfides stabilise this stretch: cysteine 60/cysteine 138, cysteine 68/cysteine 132, cysteine 69/cysteine 109, and cysteine 139/cysteine 157.

Belongs to the fungal hydrophobin family. Self-assembles to form functional amyloid fibrils called rodlets. Self-assembly into fibrillar rodlets occurs spontaneously at hydrophobic:hydrophilic interfaces and the rodlets further associate laterally to form amphipathic monolayers.

The protein localises to the secreted. The protein resides in the cell wall. Functionally, aerial growth, conidiation, and dispersal of filamentous fungi in the environment rely upon a capability of their secreting small amphipathic proteins called hydrophobins (HPBs) with low sequence identity. Class I can self-assemble into an outermost layer of rodlet bundles on aerial cell surfaces, conferring cellular hydrophobicity that supports fungal growth, development and dispersal; whereas Class II form highly ordered films at water-air interfaces through intermolecular interactions but contribute nothing to the rodlet structure. RodA is a class I hydrophobin involved in the cell surface hydrophobicity and conidiation under aerial conditions. The surface rodlet layer of the conidial cell wall makes airborne conidia of filamentous fungi inert to both innate and adaptive immunity. The polypeptide is Class I hydrophobin rodA (Penicillium camembertii).